The following is a 253-amino-acid chain: Triosephosphate isomerase (253 aa).

15 to 17 provides a ligand contact to substrate; that stretch reads NWK. The active-site Electrophile is His101. Residue Glu171 is the Proton acceptor of the active site. Substrate-binding positions include Gly177, Ser216, and 237-238; that span reads GG.

It belongs to the triosephosphate isomerase family. Homodimer.

The protein localises to the cytoplasm. The enzyme catalyses D-glyceraldehyde 3-phosphate = dihydroxyacetone phosphate. Its pathway is carbohydrate biosynthesis; gluconeogenesis. It participates in carbohydrate degradation; glycolysis; D-glyceraldehyde 3-phosphate from glycerone phosphate: step 1/1. Functionally, involved in the gluconeogenesis. Catalyzes stereospecifically the conversion of dihydroxyacetone phosphate (DHAP) to D-glyceraldehyde-3-phosphate (G3P). This is Triosephosphate isomerase from Caulobacter vibrioides (strain ATCC 19089 / CIP 103742 / CB 15) (Caulobacter crescentus).